The sequence spans 179 residues: Large ribosomal subunit protein uL5 (179 aa).

The protein belongs to the universal ribosomal protein uL5 family. As to quaternary structure, part of the 50S ribosomal subunit; part of the 5S rRNA/L5/L18/L25 subcomplex. Contacts the 5S rRNA and the P site tRNA. Forms a bridge to the 30S subunit in the 70S ribosome.

Functionally, this is one of the proteins that bind and probably mediate the attachment of the 5S RNA into the large ribosomal subunit, where it forms part of the central protuberance. In the 70S ribosome it contacts protein S13 of the 30S subunit (bridge B1b), connecting the 2 subunits; this bridge is implicated in subunit movement. Contacts the P site tRNA; the 5S rRNA and some of its associated proteins might help stabilize positioning of ribosome-bound tRNAs. This is Large ribosomal subunit protein uL5 from Geobacter sulfurreducens (strain ATCC 51573 / DSM 12127 / PCA).